The sequence spans 1436 residues: tRNA (guanosine(18)-2'-O)-methyltransferase (1436 aa).

S-adenosyl-L-methionine is bound by residues 1365 to 1367, Gly1389, and 1409 to 1418; these read LEQ and IQQFGVIRSM.

The protein belongs to the class IV-like SAM-binding methyltransferase superfamily. RNA methyltransferase TrmH family.

Its subcellular location is the cytoplasm. The enzyme catalyses guanosine(18) in tRNA + S-adenosyl-L-methionine = 2'-O-methylguanosine(18) in tRNA + S-adenosyl-L-homocysteine + H(+). Functionally, S-adenosyl-L-methionine-dependent 2'-O-ribose methyltransferase that catalyzes the formation of 2'-O-methylguanosine at position 18 (Gm18) in various tRNAs. This is tRNA (guanosine(18)-2'-O)-methyltransferase from Saccharomyces cerevisiae (strain ATCC 204508 / S288c) (Baker's yeast).